The primary structure comprises 364 residues: UDP-N-acetylglucosamine--N-acetylmuramyl-(pentapeptide) pyrophosphoryl-undecaprenol N-acetylglucosamine transferase (364 aa).

Residues 10–12 (TGG), N123, S198, I251, and Q296 each bind UDP-N-acetyl-alpha-D-glucosamine.

The protein belongs to the glycosyltransferase 28 family. MurG subfamily.

It is found in the cell membrane. It carries out the reaction di-trans,octa-cis-undecaprenyl diphospho-N-acetyl-alpha-D-muramoyl-L-alanyl-D-glutamyl-meso-2,6-diaminopimeloyl-D-alanyl-D-alanine + UDP-N-acetyl-alpha-D-glucosamine = di-trans,octa-cis-undecaprenyl diphospho-[N-acetyl-alpha-D-glucosaminyl-(1-&gt;4)]-N-acetyl-alpha-D-muramoyl-L-alanyl-D-glutamyl-meso-2,6-diaminopimeloyl-D-alanyl-D-alanine + UDP + H(+). The protein operates within cell wall biogenesis; peptidoglycan biosynthesis. Cell wall formation. Catalyzes the transfer of a GlcNAc subunit on undecaprenyl-pyrophosphoryl-MurNAc-pentapeptide (lipid intermediate I) to form undecaprenyl-pyrophosphoryl-MurNAc-(pentapeptide)GlcNAc (lipid intermediate II). This chain is UDP-N-acetylglucosamine--N-acetylmuramyl-(pentapeptide) pyrophosphoryl-undecaprenol N-acetylglucosamine transferase, found in Exiguobacterium sibiricum (strain DSM 17290 / CCUG 55495 / CIP 109462 / JCM 13490 / 255-15).